A 37-amino-acid chain; its full sequence is Large ribosomal subunit protein bL36c (37 aa).

This sequence belongs to the bacterial ribosomal protein bL36 family.

It is found in the plastid. The sequence is that of Large ribosomal subunit protein bL36c (rpl36) from Epifagus virginiana (Beechdrops).